We begin with the raw amino-acid sequence, 172 residues long: MALRIEDKKAIVAEVAEQMSSALSAAVADYRGLTVNEMTSLRKQARESGVYLRVVRNNLARLAIKGTEFECLADALKGPLVLALSKDAPGAAAKLFKNFQKDHNAFEVKNLAMSGELFGPEKLDDFAKLPTREEALATLLNVMQAPVTKFVRTLNEIPSQAVRVFAAVGDSK.

It belongs to the universal ribosomal protein uL10 family. Part of the ribosomal stalk of the 50S ribosomal subunit. The N-terminus interacts with L11 and the large rRNA to form the base of the stalk. The C-terminus forms an elongated spine to which L12 dimers bind in a sequential fashion forming a multimeric L10(L12)X complex.

Its function is as follows. Forms part of the ribosomal stalk, playing a central role in the interaction of the ribosome with GTP-bound translation factors. The protein is Large ribosomal subunit protein uL10 of Francisella tularensis subsp. mediasiatica (strain FSC147).